The sequence spans 321 residues: Endochitinase 33 (321 aa).

An N-terminal signal peptide occupies residues M1 to A19. The region spanning Q27 to R321 is the GH18 domain. The active-site Proton donor is the E167.

The protein belongs to the glycosyl hydrolase 18 family. Chitinase class III subfamily. As to quaternary structure, monomer.

It localises to the secreted. The enzyme catalyses Random endo-hydrolysis of N-acetyl-beta-D-glucosaminide (1-&gt;4)-beta-linkages in chitin and chitodextrins.. In terms of biological role, secreted chitinase involved in the degradation of chitin, a component of the cell walls of fungi and exoskeletal elements of some animals (including worms and arthropods). Plays a morphogenetic role during apical growth, cell division and differentiation (cell wall morphogenesis). May be involved in the degradation and further assimilation of phytopathogenic fungi, namely mycoparasitism, the major mechanism accounting for the antagonistic activity against phytopathogenic fungi displayed by Trichoderma. The chain is Endochitinase 33 (chit33) from Trichoderma harzianum (Hypocrea lixii).